Here is a 352-residue protein sequence, read N- to C-terminus: Ion-translocating oxidoreductase complex subunit D (352 aa).

Helical transmembrane passes span 20–40, 42–62, 89–109, and 123–143; these read IMLLVLLAAVPGIAAQLWFFG, GTLVQILLASVSTLLAEALVL, IPPLAPWWMVVLGTVFAVIIA, and PAMIGYVVLLISFPVQMTSWL. T187 carries the post-translational modification FMN phosphoryl threonine. 5 helical membrane-spanning segments follow: residues 214 to 234, 242 to 262, 267 to 287, 301 to 321, and 322 to 342; these read ILAGAGWQWVNLAWLAGGLWL, WHIPLSFLVTLALCATLGWLF, LAAPQIHLLSGATMLGAFFIL, LIFGALAGLLVWLIRSFGGYP, and DGVAFAVLLANITVPLIDYYT.

The protein belongs to the NqrB/RnfD family. In terms of assembly, the complex is composed of six subunits: RsxA, RsxB, RsxC, RsxD, RsxE and RsxG. The cofactor is FMN.

Its subcellular location is the cell inner membrane. Functionally, part of a membrane-bound complex that couples electron transfer with translocation of ions across the membrane. Required to maintain the reduced state of SoxR. This Shigella boydii serotype 18 (strain CDC 3083-94 / BS512) protein is Ion-translocating oxidoreductase complex subunit D.